A 204-amino-acid polypeptide reads, in one-letter code: MEVLPGTTVGIRVSDGVVLAAEKRVSYGLYLMSKSGKKVYRILDKMGMASAGLMADMQTLARIVEAEMRLYELDSNISPKVWTVAKLLSYILYERRLFPYYAEIVVGGLDEEGSHLYSLDPIGAIIEDDYVALGSGTQLAISIVESNYKKDMSLDEALSLALKSVYAAMKRDAASGDGVDVLVIGKSGTLEKTYPLSELQSVAV.

A propeptide spans 1–6 (MEVLPG) (removed in mature form; by autocatalysis). The active-site Nucleophile is the threonine 7.

Belongs to the peptidase T1B family. In terms of assembly, the 20S proteasome core is composed of 14 alpha and 14 beta subunits that assemble into four stacked heptameric rings, resulting in a barrel-shaped structure. The two inner rings, each composed of seven catalytic beta subunits, are sandwiched by two outer rings, each composed of seven alpha subunits. The catalytic chamber with the active sites is on the inside of the barrel. Has a gated structure, the ends of the cylinder being occluded by the N-termini of the alpha-subunits. Is capped at one or both ends by the proteasome regulatory ATPase, PAN.

Its subcellular location is the cytoplasm. It catalyses the reaction Cleavage of peptide bonds with very broad specificity.. With respect to regulation, the formation of the proteasomal ATPase PAN-20S proteasome complex, via the docking of the C-termini of PAN into the intersubunit pockets in the alpha-rings, triggers opening of the gate for substrate entry. Interconversion between the open-gate and close-gate conformations leads to a dynamic regulation of the 20S proteasome proteolysis activity. Functionally, component of the proteasome core, a large protease complex with broad specificity involved in protein degradation. This Thermofilum pendens (strain DSM 2475 / Hrk 5) protein is Proteasome subunit beta 2.